The following is a 272-amino-acid chain: Transcription factor GAL1 (272 aa).

The segment covering Met-1–Leu-10 has biased composition (polar residues). Disordered stretches follow at residues Met-1 to Thr-49, Tyr-102 to Ile-215, and Lys-246 to Tyr-272. Composition is skewed to acidic residues over residues Glu-113–Gln-122 and Ser-152–Glu-174. Residues Leu-175–Ile-215 show a composition bias toward basic and acidic residues. The segment at Cys-240 to Asp-255 adopts a CCHC-type zinc-finger fold.

The protein localises to the nucleus. Functionally, transcription factor; part of the gene cluster that mediates the biosynthesis of liamocins, glycolipids (also called heavy oils) composed of a single mannitol or arabitol headgroup linked to either three, four or even six 3,5-dihydroxydecanoic ester tail-groups. Positively regulates the expression of PKS1 and EST1 that mediate the biosynthesis of liamocins. The sequence is that of Transcription factor GAL1 from Aureobasidium melanogenum (Aureobasidium pullulans var. melanogenum).